The primary structure comprises 757 residues: Endonuclease MutS2 (757 aa).

321–328 (GPNMGGKT) contributes to the ATP binding site. In terms of domain architecture, Smr spans 681 to 756 (IDIRGMTVEE…GTGVTVVEVE (76 aa)).

The protein belongs to the DNA mismatch repair MutS family. MutS2 subfamily. Homodimer. Binds to stalled ribosomes, contacting rRNA.

Endonuclease that is involved in the suppression of homologous recombination and thus may have a key role in the control of bacterial genetic diversity. Functionally, acts as a ribosome collision sensor, splitting the ribosome into its 2 subunits. Detects stalled/collided 70S ribosomes which it binds and splits by an ATP-hydrolysis driven conformational change. Acts upstream of the ribosome quality control system (RQC), a ribosome-associated complex that mediates the extraction of incompletely synthesized nascent chains from stalled ribosomes and their subsequent degradation. Probably generates substrates for RQC. The chain is Endonuclease MutS2 from Thermotoga neapolitana (strain ATCC 49049 / DSM 4359 / NBRC 107923 / NS-E).